A 479-amino-acid polypeptide reads, in one-letter code: ATP synthase subunit beta (479 aa).

An ATP-binding site is contributed by 153 to 160 (GGAGVGKT).

It belongs to the ATPase alpha/beta chains family. In terms of assembly, F-type ATPases have 2 components, CF(1) - the catalytic core - and CF(0) - the membrane proton channel. CF(1) has five subunits: alpha(3), beta(3), gamma(1), delta(1), epsilon(1). CF(0) has three main subunits: a(1), b(2) and c(9-12). The alpha and beta chains form an alternating ring which encloses part of the gamma chain. CF(1) is attached to CF(0) by a central stalk formed by the gamma and epsilon chains, while a peripheral stalk is formed by the delta and b chains.

It localises to the cell membrane. The enzyme catalyses ATP + H2O + 4 H(+)(in) = ADP + phosphate + 5 H(+)(out). Produces ATP from ADP in the presence of a proton gradient across the membrane. The catalytic sites are hosted primarily by the beta subunits. The chain is ATP synthase subunit beta from Lactobacillus helveticus (strain DPC 4571).